An 89-amino-acid chain; its full sequence is Small ribosomal subunit protein bS20 (89 aa).

This sequence belongs to the bacterial ribosomal protein bS20 family.

Binds directly to 16S ribosomal RNA. The protein is Small ribosomal subunit protein bS20 of Sulfurovum sp. (strain NBC37-1).